The chain runs to 714 residues: DNA ligase (714 aa).

Residues 40 to 44, 90 to 91, and Glu124 each bind NAD(+); these read DADYD and SL. The active-site N6-AMP-lysine intermediate is Lys126. Positions 147, 183, 304, and 328 each coordinate NAD(+). Zn(2+)-binding residues include Cys420, Cys423, Cys438, and Cys444. Residues 634 to 714 enclose the BRCT domain; that stretch reads TRDSEVSGKT…EWAAIVAAAG (81 aa).

This sequence belongs to the NAD-dependent DNA ligase family. LigA subfamily. Mg(2+) serves as cofactor. Mn(2+) is required as a cofactor.

It carries out the reaction NAD(+) + (deoxyribonucleotide)n-3'-hydroxyl + 5'-phospho-(deoxyribonucleotide)m = (deoxyribonucleotide)n+m + AMP + beta-nicotinamide D-nucleotide.. Functionally, DNA ligase that catalyzes the formation of phosphodiester linkages between 5'-phosphoryl and 3'-hydroxyl groups in double-stranded DNA using NAD as a coenzyme and as the energy source for the reaction. It is essential for DNA replication and repair of damaged DNA. This chain is DNA ligase, found in Sphingopyxis alaskensis (strain DSM 13593 / LMG 18877 / RB2256) (Sphingomonas alaskensis).